The chain runs to 230 residues: Urease accessory protein UreF (230 aa).

Belongs to the UreF family. In terms of assembly, ureD, UreF and UreG form a complex that acts as a GTP-hydrolysis-dependent molecular chaperone, activating the urease apoprotein by helping to assemble the nickel containing metallocenter of UreC. The UreE protein probably delivers the nickel.

The protein resides in the cytoplasm. Its function is as follows. Required for maturation of urease via the functional incorporation of the urease nickel metallocenter. The sequence is that of Urease accessory protein UreF from Chromohalobacter salexigens (strain ATCC BAA-138 / DSM 3043 / CIP 106854 / NCIMB 13768 / 1H11).